Here is a 320-residue protein sequence, read N- to C-terminus: Methionyl-tRNA formyltransferase (320 aa).

112–115 provides a ligand contact to (6S)-5,6,7,8-tetrahydrofolate; it reads SLLP.

Belongs to the Fmt family.

It carries out the reaction L-methionyl-tRNA(fMet) + (6R)-10-formyltetrahydrofolate = N-formyl-L-methionyl-tRNA(fMet) + (6S)-5,6,7,8-tetrahydrofolate + H(+). Its function is as follows. Attaches a formyl group to the free amino group of methionyl-tRNA(fMet). The formyl group appears to play a dual role in the initiator identity of N-formylmethionyl-tRNA by promoting its recognition by IF2 and preventing the misappropriation of this tRNA by the elongation apparatus. The polypeptide is Methionyl-tRNA formyltransferase (Allorhizobium ampelinum (strain ATCC BAA-846 / DSM 112012 / S4) (Agrobacterium vitis (strain S4))).